We begin with the raw amino-acid sequence, 137 residues long: Putative pre-16S rRNA nuclease (137 aa).

The protein belongs to the YqgF nuclease family.

The protein resides in the cytoplasm. Could be a nuclease involved in processing of the 5'-end of pre-16S rRNA. The protein is Putative pre-16S rRNA nuclease of Flavobacterium psychrophilum (strain ATCC 49511 / DSM 21280 / CIP 103535 / JIP02/86).